The primary structure comprises 436 residues: Probable transporter MCH1 (436 aa).

7 consecutive transmembrane segments (helical) span residues 27–47, 66–86, 93–113, 119–139, 155–175, 188–208, and 249–269; these read VVAF…LLFT, MISS…GYLA, LLSL…SYLV, SVIG…SLYF, LAIS…AQIL, LEVV…ASFV, and FVSF…ILNI. The N-linked (GlcNAc...) asparagine glycan is linked to Asn-278. 5 helical membrane-spanning segments follow: residues 295 to 312, 325 to 345, 347 to 367, 373 to 393, and 410 to 430; these read VSIM…LGVL, LLVV…SAIL, GVSY…IWGI, TWGS…MFYG, and TAGA…IWYA.

Belongs to the major facilitator superfamily.

The protein resides in the vacuole membrane. Probable transporter. This Candida albicans (strain SC5314 / ATCC MYA-2876) (Yeast) protein is Probable transporter MCH1 (MCH1).